The sequence spans 369 residues: UDP-3-O-acylglucosamine N-acyltransferase (369 aa).

Residue His-263 is the Proton acceptor of the active site.

It belongs to the transferase hexapeptide repeat family. LpxD subfamily. Homotrimer.

The enzyme catalyses a UDP-3-O-[(3R)-3-hydroxyacyl]-alpha-D-glucosamine + a (3R)-hydroxyacyl-[ACP] = a UDP-2-N,3-O-bis[(3R)-3-hydroxyacyl]-alpha-D-glucosamine + holo-[ACP] + H(+). It functions in the pathway bacterial outer membrane biogenesis; LPS lipid A biosynthesis. Catalyzes the N-acylation of UDP-3-O-acylglucosamine using 3-hydroxyacyl-ACP as the acyl donor. Is involved in the biosynthesis of lipid A, a phosphorylated glycolipid that anchors the lipopolysaccharide to the outer membrane of the cell. The chain is UDP-3-O-acylglucosamine N-acyltransferase from Burkholderia vietnamiensis (strain G4 / LMG 22486) (Burkholderia cepacia (strain R1808)).